Here is a 779-residue protein sequence, read N- to C-terminus: Pre-mRNA-splicing factor cef-1 (779 aa).

HTH myb-type domains are found at residues 1 to 56 (MPVV…DPSI) and 57 to 106 (KKIE…DEAE). 2 consecutive DNA-binding regions (H-T-H motif) follow at residues 29 to 52 (WARV…NEWL) and 80 to 102 (WRTI…QRLL). 4 disordered regions span residues 113-192 (LGLT…ESRR), 246-284 (EYQR…PSVQ), 424-448 (TPLR…LRTP), and 497-525 (WELE…DRRE). The span at 127 to 152 (SADDVRKLRPGEVDPDPETKPARPDT) shows a compositional bias: basic and acidic residues. Residues 157 to 204 (EDEKEMLSEARARLANTQGKKAKRKARERQQEESRRLAALQKRRELKT) are a coiled coil. Composition is skewed to basic and acidic residues over residues 246–256 (EYQRAHFDPKK) and 263–281 (RKGE…DKDP). The stretch at 653-772 (DEEEEQISTM…EELDALTLNG (120 aa)) forms a coiled coil.

The protein belongs to the CEF1 family. In terms of assembly, associated with the spliceosome.

The protein resides in the cytoplasm. Its subcellular location is the nucleus. In terms of biological role, involved in pre-mRNA splicing and cell cycle control. The protein is Pre-mRNA-splicing factor cef-1 (cef-1) of Neurospora crassa (strain ATCC 24698 / 74-OR23-1A / CBS 708.71 / DSM 1257 / FGSC 987).